The primary structure comprises 31 residues: Cytochrome b6-f complex subunit 6 (31 aa).

A helical membrane pass occupies residues 3 to 23; the sequence is ILISYFCFLLVFFLFTLILFI.

This sequence belongs to the PetL family. As to quaternary structure, the 4 large subunits of the cytochrome b6-f complex are cytochrome b6, subunit IV (17 kDa polypeptide, PetD), cytochrome f and the Rieske protein, while the 4 small subunits are PetG, PetL, PetM and PetN. The complex functions as a dimer.

The protein resides in the plastid. Its subcellular location is the chloroplast thylakoid membrane. In terms of biological role, component of the cytochrome b6-f complex, which mediates electron transfer between photosystem II (PSII) and photosystem I (PSI), cyclic electron flow around PSI, and state transitions. PetL is important for photoautotrophic growth as well as for electron transfer efficiency and stability of the cytochrome b6-f complex. This chain is Cytochrome b6-f complex subunit 6, found in Welwitschia mirabilis (Tree tumbo).